A 247-amino-acid polypeptide reads, in one-letter code: Hydroxyacylglutathione hydrolase 1 (247 aa).

His-54, His-56, Asp-58, His-59, His-111, Asp-128, and His-165 together coordinate Zn(2+).

This sequence belongs to the metallo-beta-lactamase superfamily. Glyoxalase II family. As to quaternary structure, monomer. The cofactor is Zn(2+).

It carries out the reaction an S-(2-hydroxyacyl)glutathione + H2O = a 2-hydroxy carboxylate + glutathione + H(+). The protein operates within secondary metabolite metabolism; methylglyoxal degradation; (R)-lactate from methylglyoxal: step 2/2. Functionally, thiolesterase that catalyzes the hydrolysis of S-D-lactoyl-glutathione to form glutathione and D-lactic acid. The chain is Hydroxyacylglutathione hydrolase 1 from Vibrio vulnificus (strain YJ016).